We begin with the raw amino-acid sequence, 1343 residues long: DNA-directed RNA polymerase subunit beta (1343 aa).

The protein belongs to the RNA polymerase beta chain family. As to quaternary structure, the RNAP catalytic core consists of 2 alpha, 1 beta, 1 beta' and 1 omega subunit. When a sigma factor is associated with the core the holoenzyme is formed, which can initiate transcription.

It carries out the reaction RNA(n) + a ribonucleoside 5'-triphosphate = RNA(n+1) + diphosphate. Functionally, DNA-dependent RNA polymerase catalyzes the transcription of DNA into RNA using the four ribonucleoside triphosphates as substrates. The chain is DNA-directed RNA polymerase subunit beta from Buchnera aphidicola subsp. Cinara cedri (strain Cc).